The following is a 399-amino-acid chain: Accessory Sec system protein translocase subunit SecY2 (399 aa).

Transmembrane regions (helical) follow at residues 14–34 (IFFT…SIVS), 60–80 (LNIF…LTLI), 102–122 (ALTL…YINK), 128–148 (SNML…VWLA), 152–172 (TTYG…KSIF), 183–203 (ASLI…LFFI), 237–257 (ISIM…NFIG), 272–292 (FTNP…GYFL), 335–355 (WFGS…ALLV), and 362–382 (VYFT…AETI).

It belongs to the SecY/SEC61-alpha family. SecY2 subfamily. Component of the accessory SecA2/SecY2 protein translocase complex required to export cell wall proteins. May form heterotrimers with SecE and SecG subunits.

Its subcellular location is the cell membrane. Its function is as follows. Part of the accessory SecA2/SecY2 system specifically required for export of possible cell wall proteins. The central subunit of a protein translocation channel. This Staphylococcus epidermidis (strain ATCC 12228 / FDA PCI 1200) protein is Accessory Sec system protein translocase subunit SecY2.